We begin with the raw amino-acid sequence, 83 residues long: Small ribosomal subunit protein bS16 (83 aa).

Belongs to the bacterial ribosomal protein bS16 family.

This Borrelia hermsii (strain HS1 / DAH) protein is Small ribosomal subunit protein bS16.